Reading from the N-terminus, the 322-residue chain is Ribosomal RNA large subunit methyltransferase F (322 aa).

This sequence belongs to the methyltransferase superfamily. METTL16/RlmF family.

It is found in the cytoplasm. The catalysed reaction is adenosine(1618) in 23S rRNA + S-adenosyl-L-methionine = N(6)-methyladenosine(1618) in 23S rRNA + S-adenosyl-L-homocysteine + H(+). Specifically methylates the adenine in position 1618 of 23S rRNA. This chain is Ribosomal RNA large subunit methyltransferase F, found in Cytophaga hutchinsonii (strain ATCC 33406 / DSM 1761 / CIP 103989 / NBRC 15051 / NCIMB 9469 / D465).